The primary structure comprises 107 residues: Transcription initiation factor IIA subunit 2-2 (107 aa).

Belongs to the TFIIA subunit 2 family. As to quaternary structure, TFIIA is a heterodimer of the large unprocessed subunit 1 and a small subunit gamma. It was originally believed to be a heterotrimer of an alpha (p30), a beta (p20) and a gamma (p14) subunit.

It is found in the nucleus. Its function is as follows. TFIIA is a component of the transcription machinery of RNA polymerase II and plays an important role in transcriptional activation. TFIIA in a complex with TBP mediates transcriptional activity. The chain is Transcription initiation factor IIA subunit 2-2 (TfIIA-S-2) from Drosophila melanogaster (Fruit fly).